We begin with the raw amino-acid sequence, 496 residues long: probable leucine aminopeptidase 2 (496 aa).

The first 16 residues, 1 to 16, serve as a signal peptide directing secretion; it reads MRSLLWASLLSGVLAG. The 95-residue stretch at 111-205 folds into the PA domain; the sequence is PSVEVTADVA…SLEDGQKLIK (95 aa). N-linked (GlcNAc...) asparagine glycosylation occurs at Asn224. Residues His248 and Asp260 each coordinate Zn(2+). Glu292 functions as the Proton acceptor in the catalytic mechanism. Glu293 contributes to the Zn(2+) binding site. Residue Asn307 is glycosylated (N-linked (GlcNAc...) asparagine). Residue Asp321 coordinates Zn(2+). N-linked (GlcNAc...) asparagine glycosylation is found at Asn341 and Asn402. Position 419 (His419) interacts with Zn(2+). N-linked (GlcNAc...) asparagine glycans are attached at residues Asn424 and Asn458. The interval 475–496 is disordered; sequence KRAPKTHAHVSGSGCWHSQVEA.

It belongs to the peptidase M28 family. M28A subfamily. Monomer. It depends on Zn(2+) as a cofactor.

It localises to the secreted. Extracellular aminopeptidase that releases a wide variety of amino acids from natural peptides. The protein is probable leucine aminopeptidase 2 (lap2) of Aspergillus oryzae (strain ATCC 42149 / RIB 40) (Yellow koji mold).